We begin with the raw amino-acid sequence, 256 residues long: MTDLKKAAQRAIELMDLTTLNDDDTDQKVIDLCHKAVTPAGNTAAICIYPRFIPIARKTLDELGAEDIQIATVTNFPHGNDDIAIAVLETRAAVAYGADEVDVVFPYRALMEGNETVGYELVKACKEACGEVLLKVIIESGVLADPALIRRASELSIDAGADFIKTSTGKVPVNATLEAAEIMLTVISEKNTKVGFKPAGGVRDAAQAAEFLGVAERILGADWVSPRTFRFGASSLLNSLLHTLELADAPKPTQGY.

D102 acts as the Proton donor/acceptor in catalysis. The Schiff-base intermediate with acetaldehyde role is filled by K165. K197 acts as the Proton donor/acceptor in catalysis.

This sequence belongs to the DeoC/FbaB aldolase family. DeoC type 2 subfamily.

It is found in the cytoplasm. It carries out the reaction 2-deoxy-D-ribose 5-phosphate = D-glyceraldehyde 3-phosphate + acetaldehyde. It functions in the pathway carbohydrate degradation; 2-deoxy-D-ribose 1-phosphate degradation; D-glyceraldehyde 3-phosphate and acetaldehyde from 2-deoxy-alpha-D-ribose 1-phosphate: step 2/2. Functionally, catalyzes a reversible aldol reaction between acetaldehyde and D-glyceraldehyde 3-phosphate to generate 2-deoxy-D-ribose 5-phosphate. The sequence is that of Deoxyribose-phosphate aldolase from Shewanella sp. (strain MR-7).